The sequence spans 239 residues: Tetrahydromethanopterin S-methyltransferase subunit A (239 aa).

The Cytoplasmic segment spans residues 1-215 (MANKKSPAAT…EAAMIAKFNS (215 aa)). His-85 is a binding site for 5-hydroxybenzimidazolylcob(I)amide. Residues 216-238 (GYYNGKIQGIAIGLFLSILVFSL) form a helical membrane-spanning segment. Position 239 (Leu-239) is a topological domain, extracellular.

This sequence belongs to the MtrA family. In terms of assembly, the complex is composed of 8 subunits; MtrA, MtrB, MtrC, MtrD, MtrE, MtrF, MtrG and MtrH. The cofactor is 5-hydroxybenzimidazolylcob(I)amide.

It is found in the cell membrane. The catalysed reaction is 5-methyl-5,6,7,8-tetrahydromethanopterin + coenzyme M + 2 Na(+)(in) = 5,6,7,8-tetrahydromethanopterin + methyl-coenzyme M + 2 Na(+)(out). It participates in one-carbon metabolism; methanogenesis from CO(2); methyl-coenzyme M from 5,10-methylene-5,6,7,8-tetrahydromethanopterin: step 2/2. Part of a complex that catalyzes the formation of methyl-coenzyme M and tetrahydromethanopterin from coenzyme M and methyl-tetrahydromethanopterin. This is an energy-conserving, sodium-ion translocating step. The chain is Tetrahydromethanopterin S-methyltransferase subunit A from Methanococcus maripaludis (strain C7 / ATCC BAA-1331).